Reading from the N-terminus, the 63-residue chain is Large ribosomal subunit protein uL29 (63 aa).

Belongs to the universal ribosomal protein uL29 family.

The chain is Large ribosomal subunit protein uL29 from Baumannia cicadellinicola subsp. Homalodisca coagulata.